A 152-amino-acid polypeptide reads, in one-letter code: Protein-export protein SecB (152 aa).

It belongs to the SecB family. Homotetramer, a dimer of dimers. One homotetramer interacts with 1 SecA dimer.

The protein localises to the cytoplasm. One of the proteins required for the normal export of preproteins out of the cell cytoplasm. It is a molecular chaperone that binds to a subset of precursor proteins, maintaining them in a translocation-competent state. It also specifically binds to its receptor SecA. The polypeptide is Protein-export protein SecB (Acinetobacter baumannii (strain AB307-0294)).